The sequence spans 492 residues: MIPVVALVGRPNVGKSTLFNRLTRTRDALVADFPGLTRDRKYGRAEVEGREFICIDTGGIDGSEEGVETRMAEQSLLAIEEADVVLFMVDARAGLMPADEAIAKHLRSRQKPTFLVANKTDGLDPDQAVSDFYSLGLGEIHPIAASHGRGVTSLLEHVLVPWMDDVDPPEEVDEEAEYWAQFEAEQNGELVEEEEDDFNPQDLPIKLAIVGRPNVGKSTLTNRILGEDRVVVFDMPGTTRDSIYIPMERDGREFVLIDTAGVRKRGKITDVVEKFSVIKTLQAIEDANVVLLVIDAREGISDQDLSLLGFILNSGRSLVIVVNKWDGLSQEVKEEVKETLDYRLGFIDFARVHFISALHGSGVGNLFESVREAYDSSTRRVSTALLTRIMKMAEEDHQPPMVRGRRVKLKYAHAGGYNPPIVVIHGTQVKDLPDSYKRYLMNYFRKSLDVMGTPIRIQFKEGANPFANKRNTLTPNQLRKRKRLIKHIKKSK.

2 consecutive EngA-type G domains span residues 3-166 (PVVA…MDDV) and 205-378 (IKLA…DSST). GTP is bound by residues 9 to 16 (GRPNVGKS), 56 to 60 (DTGGI), 118 to 121 (NKTD), 211 to 218 (GRPNVGKS), 258 to 262 (DTAGV), and 323 to 326 (NKWD). In terms of domain architecture, KH-like spans 379 to 463 (RRVSTALLTR…PIRIQFKEGA (85 aa)).

The protein belongs to the TRAFAC class TrmE-Era-EngA-EngB-Septin-like GTPase superfamily. EngA (Der) GTPase family. Associates with the 50S ribosomal subunit.

Functionally, GTPase that plays an essential role in the late steps of ribosome biogenesis. In Cronobacter sakazakii (strain ATCC BAA-894) (Enterobacter sakazakii), this protein is GTPase Der.